The primary structure comprises 345 residues: MNPITFSVVLTSLASEQFLAVSSSHWLLAWMGLEINTLAIIPLMTQHKHPRAIEASTKYFLTQAAASALLLFSSLNNAWLTGEWSILDLTNPLSCATMTIAICMKLGLAPFHFWLPEVLQGLSLTTGLILSTWQKLAPMAILYQIAPMLNTPLLLTLGLTSTLIGGWGGLNQTQLRKILAFSSIAHLGWMISILPFSPQLMILNLTIYLIMTSTMFLVLKTISSTKISSLATSWSKTPSTTALSLLTLLSLGGLPPLSGFVPKWFIIQELTSQNTTILATTLALSALLSLFFYLRLTYIVTLTSSPNTSNASLTWRHHSKQPTLLLSIALILSSFIIPISPLTLT.

Helical transmembrane passes span 25–45, 60–80, 99–119, 149–171, 178–198, 199–219, 242–262, 282–302, and 324–344; these read HWLL…PLMT, FLTQ…NAWL, TIAI…PEVL, LNTP…GGLN, ILAF…PFSP, QLMI…FLVL, ALSL…GFVP, LALS…IVTL, and LLLS…PLTL.

The protein belongs to the complex I subunit 2 family. Core subunit of respiratory chain NADH dehydrogenase (Complex I) which is composed of 45 different subunits.

It is found in the mitochondrion inner membrane. It catalyses the reaction a ubiquinone + NADH + 5 H(+)(in) = a ubiquinol + NAD(+) + 4 H(+)(out). In terms of biological role, core subunit of the mitochondrial membrane respiratory chain NADH dehydrogenase (Complex I) which catalyzes electron transfer from NADH through the respiratory chain, using ubiquinone as an electron acceptor. Essential for the catalytic activity and assembly of complex I. This chain is NADH-ubiquinone oxidoreductase chain 2 (mt-nd2), found in Xenopus laevis (African clawed frog).